Reading from the N-terminus, the 250-residue chain is Proteasome subunit alpha type-8 (250 aa).

Belongs to the peptidase T1A family. In terms of assembly, component of the outer alpha-ring of the 20S proteasome core which is composed of 28 subunits that are arranged in four stacked rings, resulting in a barrel-shaped structure. The catalytic chamber with the active sites is on the inside of the barrel. Interacts with canonical subunits of the spermatoproteasome, including proteasome activators PSME4 (also called PA200) and PSME3 (also called PA28-gamma). Interacts with proteasome-interacting proteins chaperones including CCT6B and CCT2, ubiquitin ligases (TRIP12, NEDD4, TRIM36 and RAD18), and ubiquitin specific proteases such as USP9X, USP34, USP5 and USP47. Interacts with meiotic proteins cyclin dependent kinase CDK1 and the ATPase TRIP13 as well as proteins of the synaptonemal complex SIX6OS1 and SYCE3.

The protein resides in the nucleus. Functionally, component of the spermatoproteasome, a proteasome specifically found in testis that promotes acetylation-dependent degradation of histones, thereby participating actively to the exchange of histones during spermatogenesis. The proteasome is a protein complex that degrades unneeded or damaged proteins by proteolysis, a chemical reaction that breaks peptide bonds. Required for 20S core proteasome assembly, essential for the degradation of meiotic proteins RAD51 and RPA1 at late prophase I and the progression of meiosis I during spermatogenesis. Localizes to the synaptonemal complex, a 'zipper'-like structure that holds homologous chromosome pairs in synapsis during meiotic prophase I. The sequence is that of Proteasome subunit alpha type-8 from Mus musculus (Mouse).